Reading from the N-terminus, the 298-residue chain is MSLFELILLAPVDEIETLSEALDALDALSVSVEDADAQTPAEQALFGEPGMPPPKAGWERSRVVSLFASEALARDAASVLTAQDFFAGCQLVAIQAVPEQDWVRLTQSQFTPVEITPEFWIVPTWHEPPEQAKQLIRLDPGLAFGTGTHPTTRMCLRWIAGQGAANKPLARVLDYGCGSGILAIGAAKFGAVDIDAVDIDEAAVESTRANAEANHVTLNAGLPDKAVGAYQTVLANILATPLKVLAPLLCSHVQKGGSLVLAGILERQADELKAAYQPYCQLQVLDQEEGWILMGARF.

4 residues coordinate S-adenosyl-L-methionine: T152, G176, D198, and N236.

This sequence belongs to the methyltransferase superfamily. PrmA family.

The protein resides in the cytoplasm. The enzyme catalyses L-lysyl-[protein] + 3 S-adenosyl-L-methionine = N(6),N(6),N(6)-trimethyl-L-lysyl-[protein] + 3 S-adenosyl-L-homocysteine + 3 H(+). Methylates ribosomal protein L11. The polypeptide is Ribosomal protein L11 methyltransferase (Polaromonas sp. (strain JS666 / ATCC BAA-500)).